Consider the following 914-residue polypeptide: Solute carrier family 12 member 9 (914 aa).

Residues 1 to 36 (MASESSPLLAYRLLGEEGAAFPPNGAGVSGVPSSRK) are Cytoplasmic-facing. S6 is subject to Phosphoserine. A helical transmembrane segment spans residues 37-57 (LSTFLGVVVPTVLSMFSIVVF). Residues 58-72 (LRIGFVVGHAGLLQA) lie on the Extracellular side of the membrane. Residues 73 to 93 (LAMLLVAYIILALTVLSVCAI) form a helical membrane-spanning segment. The Cytoplasmic segment spans residues 94 to 119 (ATNGAVRGGGAYFMISRTLGPEVGGS). Residues 120–140 (IGLMFYLANVCGCAVSLLGLV) traverse the membrane as a helical segment. Residues 141–167 (ESILDVFGADATGSSGIQVLPQGYGWN) are Extracellular-facing. A helical membrane pass occupies residues 168–188 (LLYGSLLLGLVGGVCTLGAGL). Residues 189 to 193 (YARAS) are Cytoplasmic-facing. The helical transmembrane segment at 194–214 (FLTFLLVSGSLASVLVSFVAV) threads the bilayer. The Extracellular portion of the chain corresponds to 215 to 262 (GPRNIPLAPRPGTNASSVPHRHGHFTGFNGSTLRDNLGAGYAEDYTTG). N-linked (GlcNAc...) asparagine glycans are attached at residues N228 and N243. A helical membrane pass occupies residues 263–283 (AMMTFASVFAVLFNGCTGIMA). Residues 284 to 297 (GANMSGELKDPSRA) lie on the Cytoplasmic side of the membrane. Residues 298-318 (IPLGTIIAVAYTFFIYILLFF) form a helical membrane-spanning segment. Residues 319–338 (LSSFTCDRALLQEDYGFFRD) are Extracellular-facing. Residues 339–359 (ISLWPPLVLIGIYATALSASM) traverse the membrane as a helical segment. Residues 360–376 (SSLIGASRILHALAQDD) are Cytoplasmic-facing. A helical membrane pass occupies residues 377–399 (LFGVILAPAKVVSGGGNPWGAVL). Residues 400-416 (YSWGLVQLVLLAGKLNT) are Extracellular-facing. The helical transmembrane segment at 417-437 (LAAVVTVFYLVAYAAVDLSCL) threads the bilayer. Residues 438–466 (SLEWASAPNFRPTFSLFSWHTCLLGVASC) are Cytoplasmic-facing. A helical membrane pass occupies residues 467-487 (LLMMFLISPGAAGGSLLLMGL). The Extracellular portion of the chain corresponds to 488–740 (LSALLTARGG…LLRPRGGPGY (253 aa)). The disordered stretch occupies residues 645–678 (PAFSEPAEGTREGGSPALSTLFPPPRAPGSPRAL). A helical transmembrane segment spans residues 741 to 761 (VDVCGLFLLQMATILSMVPAW). The Cytoplasmic portion of the chain corresponds to 762–914 (HSARLRIFLC…GVTPVTCTDL (153 aa)). Positions 844-864 (QGRGTVGGPGGPEGRDGEEGP) are disordered.

Belongs to the SLC12A transporter family. In terms of assembly, interacts with SLC12A1.

The protein resides in the cell membrane. The protein localises to the lysosome membrane. In terms of biological role, may be an inhibitor of SLC12A1. Seems to correspond to a subunit of a multimeric transport system and thus, additional subunits may be required for its function. May play a role in lysosomal ion flux and osmoregulation. The chain is Solute carrier family 12 member 9 (Slc12a9) from Mus musculus (Mouse).